The following is a 286-amino-acid chain: Nucleotide-binding protein VC_2532 (286 aa).

8–15 (GQSGAGKS) is a binding site for ATP. A GTP-binding site is contributed by 56–59 (DIRN).

It belongs to the RapZ-like family.

In terms of biological role, displays ATPase and GTPase activities. The chain is Nucleotide-binding protein VC_2532 from Vibrio cholerae serotype O1 (strain ATCC 39315 / El Tor Inaba N16961).